The following is a 169-amino-acid chain: MKNKVVFIGMPGCGKSTIGRLVSEELKINFIDMDNYIENMTSKTIPELFEHGENYFRDFESLACRELAKEGKAIISSGGGVVKRKENIDILKEESFIIFIDRPLEELLGDVDISKRPLLKEGREKIIKLYEERYELYRLCADKIIRNDREIGNIVNEIKEVILDNLEMN.

12-17 provides a ligand contact to ATP; it reads GCGKST. Ser-16 provides a ligand contact to Mg(2+). Substrate is bound by residues Asp-34, Arg-57, and Gly-79. Arg-116 is a binding site for ATP. Position 133 (Arg-133) interacts with substrate.

Belongs to the shikimate kinase family. Monomer. The cofactor is Mg(2+).

The protein resides in the cytoplasm. It carries out the reaction shikimate + ATP = 3-phosphoshikimate + ADP + H(+). The protein operates within metabolic intermediate biosynthesis; chorismate biosynthesis; chorismate from D-erythrose 4-phosphate and phosphoenolpyruvate: step 5/7. In terms of biological role, catalyzes the specific phosphorylation of the 3-hydroxyl group of shikimic acid using ATP as a cosubstrate. The chain is Shikimate kinase from Clostridium beijerinckii (strain ATCC 51743 / NCIMB 8052) (Clostridium acetobutylicum).